A 152-amino-acid chain; its full sequence is MENLIVAISNFPAVLPIGLSFLKRDFITFGTITFVSIASFISHLIENHKHGMPGIGFSQQTSYIWNRFDVLGCILSVARFSYLYYNRHGLTVVPIVNNKWLFAMTIPVFILLRVSEYDKYNPNLKTRYIITHCMWHAGIFGLMYYFLKNIVY.

4 consecutive transmembrane segments (helical) span residues 2 to 22 (ENLI…LSFL), 26 to 46 (FITF…HLIE), 92 to 112 (VVPI…FILL), and 128 to 148 (YIIT…YFLK).

The protein localises to the membrane. This is an uncharacterized protein from Acanthamoeba polyphaga mimivirus (APMV).